The chain runs to 354 residues: Hyaluronan and proteoglycan link protein 1 (354 aa).

The propeptide occupies methionine 1–leucine 9. N-linked (GlcNAc...) asparagine glycans are attached at residues asparagine 21 and asparagine 56. One can recognise an Ig-like V-type domain in the interval proline 38–valine 152. Intrachain disulfides connect cysteine 61/cysteine 139, cysteine 181/cysteine 252, cysteine 205/cysteine 226, cysteine 279/cysteine 349, and cysteine 304/cysteine 325. Link domains follow at residues valine 159–threonine 254 and glycine 259–arginine 351.

Belongs to the HAPLN family.

Its subcellular location is the secreted. The protein resides in the extracellular space. It is found in the extracellular matrix. In terms of biological role, stabilizes the aggregates of proteoglycan monomers with hyaluronic acid in the extracellular cartilage matrix. The protein is Hyaluronan and proteoglycan link protein 1 (HAPLN1) of Sus scrofa (Pig).